Consider the following 1387-residue polypeptide: Collagen-like protein 6 (1387 aa).

N-linked (GlcNAc...) asparagine; by host glycosylation is present at Asn-6. Collagen-like domains are found at residues 95 to 154 (GNNG…KGDI), 161 to 220 (GDKG…KGDN), 266 to 325 (GEKG…KGEM), 344 to 403 (GSKG…KGEK), 450 to 508 (IKGD…KGDI), and 512 to 751 (GEKG…SGSS). Disordered regions lie at residues 98-219 (GNNG…DKGD), 268-422 (KGEI…QNQG), and 454-753 (KGEK…SSCQ). Composition is skewed to basic and acidic residues over residues 114–181 (IKGD…KGSK), 189–199 (SKGDNGDKGSK), 207–219 (SKGD…DKGD), 268–340 (KGEI…DGIK), 364–382 (KGDR…KGDN), 390–405 (SKGD…EKGE), 454–535 (KGEK…KGDI), and 544–747 (KGEK…DKGE). Asn-794, Asn-814, Asn-819, Asn-826, Asn-846, Asn-886, Asn-894, Asn-969, Asn-1032, Asn-1077, Asn-1123, Asn-1200, Asn-1224, Asn-1232, and Asn-1233 each carry an N-linked (GlcNAc...) asparagine; by host glycan.

Post-translationally, may be hydroxylated on lysine by the viral-encoded procollagen-lysine,2-oxoglutarate 5-dioxygenase.

It localises to the virion. In terms of biological role, may participate in the formation of a layer of cross-linked glycosylated fibrils at the viral surface thus giving it a hairy-like appearance. The chain is Collagen-like protein 6 from Acanthamoeba polyphaga mimivirus (APMV).